Reading from the N-terminus, the 156-residue chain is Small ribosomal subunit protein uS7 (156 aa).

It belongs to the universal ribosomal protein uS7 family. As to quaternary structure, part of the 30S ribosomal subunit. Contacts proteins S9 and S11.

Functionally, one of the primary rRNA binding proteins, it binds directly to 16S rRNA where it nucleates assembly of the head domain of the 30S subunit. Is located at the subunit interface close to the decoding center, probably blocks exit of the E-site tRNA. The polypeptide is Small ribosomal subunit protein uS7 (Acinetobacter baylyi (strain ATCC 33305 / BD413 / ADP1)).